A 29-amino-acid polypeptide reads, in one-letter code: ShK homolog Ask132958 (29 aa).

In terms of domain architecture, ShKT spans 1–29 (CENTISGCSRADCLLTHRKQGCQKTCGLC). 3 disulfide bridges follow: C1-C29, C8-C22, and C13-C26.

Belongs to the sea anemone type 1 potassium channel toxin family. Type 1a subfamily.

The protein resides in the secreted. Its subcellular location is the nematocyst. Its function is as follows. This peptide is similar to the potassium channel toxin ShK, but does not show activity on potassium channels. It appears that Lys-19, which is expected to occupy the pore of the channel, is not sufficiently accessible for binding, and therefore that this peptide must have a distinct functional role that does not involve potassium channels. It is noteworthy that this peptide is much more stable in the presence of trypsin, chymotrypsin and pepsin than the toxin ShK. The polypeptide is ShK homolog Ask132958 (Anemonia sulcata (Mediterranean snakelocks sea anemone)).